Reading from the N-terminus, the 205-residue chain is Phosphoheptose isomerase (205 aa).

One can recognise an SIS domain in the interval 38 to 200 (LAVRLALGSK…LFEAVGELEP (163 aa)). 53–55 (NGG) lines the substrate pocket. Residues H62 and E66 each contribute to the Zn(2+) site. Residues E66, 95-96 (ND), 121-123 (STS), S126, and Q173 each bind substrate. Residues Q173 and H181 each contribute to the Zn(2+) site.

This sequence belongs to the SIS family. GmhA subfamily. In terms of assembly, homotetramer. The cofactor is Zn(2+).

It is found in the cytoplasm. The catalysed reaction is 2 D-sedoheptulose 7-phosphate = D-glycero-alpha-D-manno-heptose 7-phosphate + D-glycero-beta-D-manno-heptose 7-phosphate. It participates in carbohydrate biosynthesis; D-glycero-D-manno-heptose 7-phosphate biosynthesis; D-glycero-alpha-D-manno-heptose 7-phosphate and D-glycero-beta-D-manno-heptose 7-phosphate from sedoheptulose 7-phosphate: step 1/1. Its function is as follows. Catalyzes the isomerization of sedoheptulose 7-phosphate in D-glycero-D-manno-heptose 7-phosphate. This is Phosphoheptose isomerase from Maridesulfovibrio salexigens (strain ATCC 14822 / DSM 2638 / NCIMB 8403 / VKM B-1763) (Desulfovibrio salexigens).